A 297-amino-acid chain; its full sequence is MPLDNVRNIVLVLSGKGGVGKSSITTQLALTLSLQGHTVGVLDIDLTGPSIPRFFGIEESKVRQAPGGWIPVDVHAQQTLSAHRLQKTAEGQEIGALSCMSLGFILPNRSDAVIWRGPKKTAMVRQFLTDVLWPKVDYLLIDTPPGTSDEHISLLETLLKNTSTTPHASLPYLAGAVVVTTPQAISISDVKKELNFCKKTGIRVLGVVENMAGFVCPNCSECTNVFSKGGGEVMARDFNVPFLGSVPIDPAFVQLVEEGTRPLYPEGTIMAGTDVSAAPNGKEAGSTTHGSRLLICE.

ATP is bound at residue 15 to 22 (GKGGVGKS). [4Fe-4S] cluster is bound by residues C216 and C219.

It belongs to the Mrp/NBP35 ATP-binding proteins family. NUBP2/CFD1 subfamily. As to quaternary structure, heterotetramer of 2 NBP35 and 2 CFD1 chains. The cofactor is [4Fe-4S] cluster.

The protein localises to the cytoplasm. In terms of biological role, component of the cytosolic iron-sulfur (Fe/S) protein assembly (CIA) machinery. Required for maturation of extramitochondrial Fe-S proteins. The NBP35-CFD1 heterotetramer forms a Fe-S scaffold complex, mediating the de novo assembly of an Fe-S cluster and its transfer to target apoproteins. The polypeptide is Cytosolic Fe-S cluster assembly factor CFD1 (Phaeosphaeria nodorum (strain SN15 / ATCC MYA-4574 / FGSC 10173) (Glume blotch fungus)).